A 448-amino-acid chain; its full sequence is uncharacterized protein (448 aa).

Lys297 is subject to N6-(pyridoxal phosphate)lysine.

The protein belongs to the class-III pyridoxal-phosphate-dependent aminotransferase family. It depends on pyridoxal 5'-phosphate as a cofactor.

This is an uncharacterized protein from Sinorhizobium fredii (strain NBRC 101917 / NGR234).